Reading from the N-terminus, the 229-residue chain is Orotidine 5'-phosphate decarboxylase (229 aa).

Residues aspartate 9, lysine 31, 58–67 (DLKLFDIPNT), threonine 121, arginine 179, glutamine 188, glycine 208, and arginine 209 each bind substrate. Residue lysine 60 is the Proton donor of the active site.

This sequence belongs to the OMP decarboxylase family. Type 1 subfamily. As to quaternary structure, homodimer.

The enzyme catalyses orotidine 5'-phosphate + H(+) = UMP + CO2. The protein operates within pyrimidine metabolism; UMP biosynthesis via de novo pathway; UMP from orotate: step 2/2. Catalyzes the decarboxylation of orotidine 5'-monophosphate (OMP) to uridine 5'-monophosphate (UMP). This Lawsonia intracellularis (strain PHE/MN1-00) protein is Orotidine 5'-phosphate decarboxylase.